Here is a 70-residue protein sequence, read N- to C-terminus: Guanine nucleotide-binding protein G(I)/G(S)/G(O) subunit gamma-8 (70 aa).

The residue at position 67 (cysteine 67) is a Cysteine methyl ester. Residue cysteine 67 is the site of S-geranylgeranyl cysteine attachment. A propeptide spans 68 to 70 (VLL) (removed in mature form).

The protein belongs to the G protein gamma family. G proteins are composed of 3 units, alpha, beta and gamma.

The protein resides in the cell membrane. Its function is as follows. Guanine nucleotide-binding proteins (G proteins) are involved as a modulator or transducer in various transmembrane signaling systems. The beta and gamma chains are required for the GTPase activity, for replacement of GDP by GTP, and for G protein-effector interaction. This Homo sapiens (Human) protein is Guanine nucleotide-binding protein G(I)/G(S)/G(O) subunit gamma-8 (GNG8).